Here is an 871-residue protein sequence, read N- to C-terminus: Alanine--tRNA ligase (871 aa).

Zn(2+)-binding residues include His-559, His-563, Cys-661, and His-665.

Belongs to the class-II aminoacyl-tRNA synthetase family. Zn(2+) serves as cofactor.

It is found in the cytoplasm. It carries out the reaction tRNA(Ala) + L-alanine + ATP = L-alanyl-tRNA(Ala) + AMP + diphosphate. Its function is as follows. Catalyzes the attachment of alanine to tRNA(Ala) in a two-step reaction: alanine is first activated by ATP to form Ala-AMP and then transferred to the acceptor end of tRNA(Ala). Also edits incorrectly charged Ser-tRNA(Ala) and Gly-tRNA(Ala) via its editing domain. The sequence is that of Alanine--tRNA ligase from Aquifex pyrophilus.